Reading from the N-terminus, the 360-residue chain is Probable neutral protease 2 homolog A (360 aa).

Positions Met-1–Ala-17 are cleaved as a signal peptide. Residues Ala-18 to Arg-183 constitute a propeptide that is removed on maturation. Cystine bridges form between Cys-191/Cys-262, Cys-269/Cys-287, and Cys-300/Cys-360. The N-linked (GlcNAc...) asparagine glycan is linked to Asn-205. Residue His-311 participates in Zn(2+) binding. The active site involves Glu-312. The Zn(2+) site is built by His-315 and Asp-326.

This sequence belongs to the peptidase M35 family. Requires Zn(2+) as cofactor.

It is found in the secreted. It carries out the reaction Preferential cleavage of bonds with hydrophobic residues in P1'. Also 3-Asn-|-Gln-4 and 8-Gly-|-Ser-9 bonds in insulin B chain.. Functionally, probable secreted metalloprotease that shows high activities on basic nuclear substrates such as histone and protamine. May be involved in virulence. The sequence is that of Probable neutral protease 2 homolog A (NpII-A) from Trichophyton rubrum (Athlete's foot fungus).